We begin with the raw amino-acid sequence, 291 residues long: Tyrosine recombinase XerD (291 aa).

Residues 1–82 (MEEGLIDRLL…ACKRLYIWME (82 aa)) form the Core-binding (CB) domain. Residues 103 to 285 (NIPTLITEQQ…ANVWLQGVVK (183 aa)) enclose the Tyr recombinase domain. Catalysis depends on residues R143, K167, H237, R240, and H263. The active-site O-(3'-phospho-DNA)-tyrosine intermediate is the Y272.

It belongs to the 'phage' integrase family. XerD subfamily. As to quaternary structure, forms a cyclic heterotetrameric complex composed of two molecules of XerC and two molecules of XerD.

The protein resides in the cytoplasm. Functionally, site-specific tyrosine recombinase, which acts by catalyzing the cutting and rejoining of the recombining DNA molecules. The XerC-XerD complex is essential to convert dimers of the bacterial chromosome into monomers to permit their segregation at cell division. It also contributes to the segregational stability of plasmids. The protein is Tyrosine recombinase XerD of Neisseria meningitidis serogroup B (strain ATCC BAA-335 / MC58).